Consider the following 784-residue polypeptide: Toll-like receptor 2 (784 aa).

The signal sequence occupies residues 1–20 (MPHTLWMVWVLGVIISLSKE). The Extracellular portion of the chain corresponds to 21–587 (ESSNQASLSC…VRLSVSECHR (567 aa)). The cysteines at positions 30 and 36 are disulfide-linked. 19 LRR repeats span residues 54-77 (VKSL…RCVN), 78-101 (LQAL…SLGS), 102-125 (LEHL…PLSS), 126-150 (LTFL…HLTK), 151-175 (LQIL…GLTF), 176-199 (LEEL…SIQN), 200-223 (VSHL…VTSS), 224-250 (VECL…TNSL), 251-278 (IKKF…QISG), 279-308 (LLEL…DPGK), 309-337 (VETL…LTER), 338-361 (VKRI…HLKS), 362-388 (LEYL…AWPS), 389-414 (LQTL…TLKN), 415-437 (LTNV…WPEK), 438-457 (MKYL…CIPK), 458-478 (TLEI…NLPQ), 479-500 (LKEL…LLPM), and 501-524 (LLVL…SFHT). Residue N114 is glycosylated (N-linked (GlcNAc...) asparagine). N199 carries N-linked (GlcNAc...) asparagine glycosylation. C353 and C382 are disulfide-bonded. The N-linked (GlcNAc...) asparagine glycan is linked to N414. C432 and C454 are oxidised to a cystine. Residue N442 is glycosylated (N-linked (GlcNAc...) asparagine). Positions 525–579 (LKTLEAGGNNFICSCEFLSFTQEQQALAKVLIDWPANYLCDSPSHVRGQQVQDVR) constitute an LRRCT domain. Residues 588–608 (TALVSGMCCALFLLILLTGVL) form a helical membrane-spanning segment. Residues 609 to 784 (CHRFHGLWYM…WVNLRAAIKS (176 aa)) are Cytoplasmic-facing. One can recognise a TIR domain in the interval 639-782 (ICYDAFVSYS…GFWVNLRAAI (144 aa)). K754 is covalently cross-linked (Glycyl lysine isopeptide (Lys-Gly) (interchain with G-Cter in ubiquitin)). The short motif at 761 to 778 (YLEWPMDEAQREGFWVNL) is the ATG16L1-binding motif element.

This sequence belongs to the Toll-like receptor family. As to quaternary structure, interacts with LY96, TLR1 and TLR6 (via extracellular domain). TLR2 seems to exist in heterodimers with either TLR1 or TLR6 before stimulation by the ligand. The heterodimers form bigger oligomers in response to their corresponding ligands as well as further heterotypic associations with other receptors such as CD14 and/or CD36. Binds MYD88 (via TIR domain). Interacts with TICAM1. Interacts with CNPY3. Interacts with ATG16L1. Interacts with PPP1R11. Interacts with TICAM2. Interacts with TIRAP. Post-translationally, ubiquitinated at Lys-754 by PPP1R11, leading to its degradation. Deubiquitinated by USP2. In terms of processing, glycosylation of Asn-442 is critical for secretion of the N-terminal ectodomain of TLR2.

It localises to the membrane. The protein localises to the cytoplasmic vesicle. It is found in the phagosome membrane. Its subcellular location is the membrane raft. In terms of biological role, cooperates with LY96 to mediate the innate immune response to bacterial lipoproteins and other microbial cell wall components. Cooperates with TLR1 or TLR6 to mediate the innate immune response to bacterial lipoproteins or lipopeptides. Acts via MYD88 and TRAF6, leading to NF-kappa-B activation, cytokine secretion and the inflammatory response. May also promote apoptosis in response to lipoproteins. Forms activation clusters composed of several receptors depending on the ligand, these clusters trigger signaling from the cell surface and subsequently are targeted to the Golgi in a lipid-raft dependent pathway. Forms the cluster TLR2:TLR6:CD14:CD36 in response to diacylated lipopeptides and TLR2:TLR1:CD14 in response to triacylated lipopeptides. The sequence is that of Toll-like receptor 2 (TLR2) from Gorilla gorilla gorilla (Western lowland gorilla).